A 250-amino-acid polypeptide reads, in one-letter code: Ubiquinone/menaquinone biosynthesis C-methyltransferase UbiE (250 aa).

S-adenosyl-L-methionine-binding positions include serine 73, aspartate 94, and asparagine 122 to alanine 123.

It belongs to the class I-like SAM-binding methyltransferase superfamily. MenG/UbiE family.

The enzyme catalyses a 2-demethylmenaquinol + S-adenosyl-L-methionine = a menaquinol + S-adenosyl-L-homocysteine + H(+). It catalyses the reaction a 2-methoxy-6-(all-trans-polyprenyl)benzene-1,4-diol + S-adenosyl-L-methionine = a 5-methoxy-2-methyl-3-(all-trans-polyprenyl)benzene-1,4-diol + S-adenosyl-L-homocysteine + H(+). The protein operates within quinol/quinone metabolism; menaquinone biosynthesis; menaquinol from 1,4-dihydroxy-2-naphthoate: step 2/2. Its pathway is cofactor biosynthesis; ubiquinone biosynthesis. Functionally, methyltransferase required for the conversion of demethylmenaquinol (DMKH2) to menaquinol (MKH2) and the conversion of 2-polyprenyl-6-methoxy-1,4-benzoquinol (DDMQH2) to 2-polyprenyl-3-methyl-6-methoxy-1,4-benzoquinol (DMQH2). The sequence is that of Ubiquinone/menaquinone biosynthesis C-methyltransferase UbiE from Legionella pneumophila (strain Paris).